The chain runs to 439 residues: Chromosomal replication initiator protein DnaA (439 aa).

A domain I, interacts with DnaA modulators region spans residues Met1–Gly75. Residues Gly75–Gly101 are domain II. The segment at Asn102–Ala319 is domain III, AAA+ region. ATP-binding residues include Gly147, Gly149, Lys150, and Thr151. Residues Asn320–Glu439 form a domain IV, binds dsDNA region.

It belongs to the DnaA family. As to quaternary structure, oligomerizes as a right-handed, spiral filament on DNA at oriC.

It is found in the cytoplasm. Functionally, plays an essential role in the initiation and regulation of chromosomal replication. ATP-DnaA binds to the origin of replication (oriC) to initiate formation of the DNA replication initiation complex once per cell cycle. Binds the DnaA box (a 9 base pair repeat at the origin) and separates the double-stranded (ds)DNA. Forms a right-handed helical filament on oriC DNA; dsDNA binds to the exterior of the filament while single-stranded (ss)DNA is stabiized in the filament's interior. The ATP-DnaA-oriC complex binds and stabilizes one strand of the AT-rich DNA unwinding element (DUE), permitting loading of DNA polymerase. After initiation quickly degrades to an ADP-DnaA complex that is not apt for DNA replication. Binds acidic phospholipids. The chain is Chromosomal replication initiator protein DnaA from Xylella fastidiosa (strain Temecula1 / ATCC 700964).